Here is a 270-residue protein sequence, read N- to C-terminus: tRNA pseudouridine synthase A (270 aa).

Aspartate 60 acts as the Nucleophile in catalysis. Residue tyrosine 118 coordinates substrate.

The protein belongs to the tRNA pseudouridine synthase TruA family. Homodimer.

It catalyses the reaction uridine(38/39/40) in tRNA = pseudouridine(38/39/40) in tRNA. Its function is as follows. Formation of pseudouridine at positions 38, 39 and 40 in the anticodon stem and loop of transfer RNAs. The protein is tRNA pseudouridine synthase A of Salmonella agona (strain SL483).